Here is a 153-residue protein sequence, read N- to C-terminus: LOB domain-containing protein 26 (153 aa).

In terms of domain architecture, LOB spans 4–105 (NPCEVCRFQN…EEVSKTKKLL (102 aa)). A disordered region spans residues 126-153 (KSKPSVLRKRKRKTKSSDESAIRVVEDS). Basic and acidic residues predominate over residues 140-153 (KSSDESAIRVVEDS).

Belongs to the LOB domain-containing protein family.

In Arabidopsis thaliana (Mouse-ear cress), this protein is LOB domain-containing protein 26 (LBD26).